A 566-amino-acid polypeptide reads, in one-letter code: Arginine--tRNA ligase (566 aa).

The 'HIGH' region signature appears at 123–133; the sequence is PNVAKPFHVGH.

Belongs to the class-I aminoacyl-tRNA synthetase family. As to quaternary structure, monomer.

It localises to the cytoplasm. The catalysed reaction is tRNA(Arg) + L-arginine + ATP = L-arginyl-tRNA(Arg) + AMP + diphosphate. This is Arginine--tRNA ligase from Alkaliphilus metalliredigens (strain QYMF).